A 490-amino-acid polypeptide reads, in one-letter code: Glutamate--tRNA ligase (490 aa).

The 'HIGH' region motif lies at 9-19 (PSPTGLQHIGG). A 'KMSKS' region motif is present at residues 251–255 (KLSKR). Residue K254 participates in ATP binding.

It belongs to the class-I aminoacyl-tRNA synthetase family. Glutamate--tRNA ligase type 1 subfamily. In terms of assembly, monomer.

It localises to the cytoplasm. The catalysed reaction is tRNA(Glu) + L-glutamate + ATP = L-glutamyl-tRNA(Glu) + AMP + diphosphate. In terms of biological role, catalyzes the attachment of glutamate to tRNA(Glu) in a two-step reaction: glutamate is first activated by ATP to form Glu-AMP and then transferred to the acceptor end of tRNA(Glu). This is Glutamate--tRNA ligase from Borreliella afzelii (strain PKo) (Borrelia afzelii).